The chain runs to 122 residues: Large ribosomal subunit protein uL14 (122 aa).

The protein belongs to the universal ribosomal protein uL14 family. Part of the 50S ribosomal subunit. Forms a cluster with proteins L3 and L19. In the 70S ribosome, L14 and L19 interact and together make contacts with the 16S rRNA in bridges B5 and B8.

Functionally, binds to 23S rRNA. Forms part of two intersubunit bridges in the 70S ribosome. This chain is Large ribosomal subunit protein uL14, found in Chlorobium chlorochromatii (strain CaD3).